Consider the following 94-residue polypeptide: Large ribosomal subunit protein bL27 (94 aa).

The propeptide occupies 1 to 9 (MLELNLQLF). The disordered stretch occupies residues 12–33 (KKGGGSTSNGRDSQAKRLGAKA).

Belongs to the bacterial ribosomal protein bL27 family. Post-translationally, the N-terminus is cleaved by ribosomal processing cysteine protease Prp.

This is Large ribosomal subunit protein bL27 from Lactococcus lactis subsp. cremoris (strain MG1363).